Consider the following 438-residue polypeptide: Glutaryl-CoA dehydrogenase, mitochondrial (438 aa).

A mitochondrion-targeting transit peptide spans 1–44 (MALRGVSVRLLSRGPGLHVLRTWVSSAAQTEKGGRTQSQLAKSS). Substrate is bound by residues 138–139 (RS) and serine 186. FAD-binding positions include 177–186 (FGLTEPNSGS) and 212–214 (WIT). An N6-acetyllysine modification is found at lysine 240. 287 to 294 (FGCLNNAR) lines the substrate pocket. Residues arginine 319, glutamine 330, and 387-391 (DMLGG) each bind FAD. The active-site Proton acceptor is glutamate 414. Glycine 415 is a substrate binding site. FAD is bound by residues 416-418 (THD) and phenylalanine 434.

Belongs to the acyl-CoA dehydrogenase family. In terms of assembly, homotetramer. FAD is required as a cofactor. In terms of tissue distribution, isoform Long and isoform Short are expressed in fibroblasts and liver.

The protein localises to the mitochondrion matrix. It carries out the reaction glutaryl-CoA + oxidized [electron-transfer flavoprotein] + 2 H(+) = (2E)-butenoyl-CoA + reduced [electron-transfer flavoprotein] + CO2. It functions in the pathway amino-acid metabolism; lysine degradation. Its pathway is amino-acid metabolism; tryptophan metabolism. Strongly inhibited by MCPA-CoA, a metabolite of hypoglycin which is present in unripened fruit of the ackee tree. Functionally, catalyzes the oxidative decarboxylation of glutaryl-CoA to crotonyl-CoA and CO(2) in the degradative pathway of L-lysine, L-hydroxylysine, and L-tryptophan metabolism. It uses electron transfer flavoprotein as its electron acceptor. Isoform Short is inactive. The polypeptide is Glutaryl-CoA dehydrogenase, mitochondrial (GCDH) (Homo sapiens (Human)).